Reading from the N-terminus, the 269-residue chain is Formamidopyrimidine-DNA glycosylase (269 aa).

Pro-2 serves as the catalytic Schiff-base intermediate with DNA. Residue Glu-3 is the Proton donor of the active site. Catalysis depends on Lys-57, which acts as the Proton donor; for beta-elimination activity. Residues His-90, Arg-109, and Arg-150 each coordinate DNA. The FPG-type zinc finger occupies 235–269 (NVYGRAGQPCVQCDAILKADRHGQRSTAYCPQCQR). The Proton donor; for delta-elimination activity role is filled by Arg-259.

Belongs to the FPG family. Monomer. The cofactor is Zn(2+).

The catalysed reaction is Hydrolysis of DNA containing ring-opened 7-methylguanine residues, releasing 2,6-diamino-4-hydroxy-5-(N-methyl)formamidopyrimidine.. It catalyses the reaction 2'-deoxyribonucleotide-(2'-deoxyribose 5'-phosphate)-2'-deoxyribonucleotide-DNA = a 3'-end 2'-deoxyribonucleotide-(2,3-dehydro-2,3-deoxyribose 5'-phosphate)-DNA + a 5'-end 5'-phospho-2'-deoxyribonucleoside-DNA + H(+). In terms of biological role, involved in base excision repair of DNA damaged by oxidation or by mutagenic agents. Acts as a DNA glycosylase that recognizes and removes damaged bases. Has a preference for oxidized purines, such as 7,8-dihydro-8-oxoguanine (8-oxoG). Has AP (apurinic/apyrimidinic) lyase activity and introduces nicks in the DNA strand. Cleaves the DNA backbone by beta-delta elimination to generate a single-strand break at the site of the removed base with both 3'- and 5'-phosphates. This is Formamidopyrimidine-DNA glycosylase from Alcanivorax borkumensis (strain ATCC 700651 / DSM 11573 / NCIMB 13689 / SK2).